Reading from the N-terminus, the 1200-residue chain is Ice nucleation protein (1200 aa).

An octapeptide periodicity region spans residues 176-1151 (ATYGSTLSGD…LSAGEDSILI (976 aa)).

Belongs to the bacterial ice nucleation protein family.

The protein localises to the cell outer membrane. Its function is as follows. Ice nucleation proteins enable bacteria to nucleate crystallization in supercooled water. In Pseudomonas syringae pv. syringae, this protein is Ice nucleation protein (inaZ).